Consider the following 314-residue polypeptide: Ribose-phosphate pyrophosphokinase (314 aa).

ATP-binding positions include 37-39 (DGE) and 96-97 (RQ). His-131 and Asp-170 together coordinate Mg(2+). Residue Lys-194 is part of the active site. D-ribose 5-phosphate contacts are provided by residues Arg-196, Asp-220, and 224–228 (DTGGT).

Belongs to the ribose-phosphate pyrophosphokinase family. Class I subfamily. As to quaternary structure, homohexamer. Mg(2+) serves as cofactor.

It is found in the cytoplasm. The enzyme catalyses D-ribose 5-phosphate + ATP = 5-phospho-alpha-D-ribose 1-diphosphate + AMP + H(+). It functions in the pathway metabolic intermediate biosynthesis; 5-phospho-alpha-D-ribose 1-diphosphate biosynthesis; 5-phospho-alpha-D-ribose 1-diphosphate from D-ribose 5-phosphate (route I): step 1/1. Involved in the biosynthesis of the central metabolite phospho-alpha-D-ribosyl-1-pyrophosphate (PRPP) via the transfer of pyrophosphoryl group from ATP to 1-hydroxyl of ribose-5-phosphate (Rib-5-P). The sequence is that of Ribose-phosphate pyrophosphokinase from Vibrio parahaemolyticus serotype O3:K6 (strain RIMD 2210633).